The chain runs to 358 residues: COP9 signalosome complex subunit 5b (358 aa).

Position 1 is an N-acetylmethionine (Met1). Residues 59–196 form the MPN domain; that stretch reads VKISALALLK…IGAFRTYSKG (138 aa). Residues His142, His144, and Asp155 each coordinate Zn(2+). The short motif at 142–155 is the JAMM motif element; the sequence is HSHPGYGCWLSGID. Polar residues predominate over residues 338–349; it reads MRQSNNKSPTDS. The tract at residues 338–358 is disordered; it reads MRQSNNKSPTDSSDPDPMITY.

It belongs to the peptidase M67A family. CSN5 subfamily. In terms of assembly, component of the CSN complex, probably composed of CSN1, CSN2, CSN3, CSN4, CSN5 (CSN5A or CSN5B), CSN6 (CSN6A or CSN6B), CSN7 and CSN8. CSN5A or CSN5B are present within distinct CSN complexes each containing only one copy of CSN5. Interacts with itself. In the complex, it is located in the center and probably interacts directly with CSN4 and CSN6A or CSN6B. Also exists as monomeric form. Interacts with CYT1 in vitro and in planta. Interacts with FLZ3. Requires a divalent metal cation as cofactor. Ubiquitously expressed. Highly expressed in flowers and roots. Expressed at lower level in seedlings and siliques.

Its subcellular location is the cytoplasm. The protein resides in the nucleus. Its function is as follows. Probable protease subunit of the COP9 signalosome complex (CSN), a complex involved in various cellular and developmental processes such as photomorphogenesis and auxin and jasmonate responses. The CSN complex is an essential regulator of the ubiquitin (Ubl) conjugation pathway by mediating the deneddylation of the cullin subunits of the SCF-type E3 ligase complexes, leading to decrease the Ubl ligase activity of SCF. In the complex, it probably acts as the catalytic center that mediates the cleavage of Nedd8 from cullins. It however has no metalloprotease activity by itself and requires the other subunits of the CSN complex. The CSN complex is involved in repression of photomorphogenesis in darkness by regulating the activity of COP1-containing Ubl ligase complexes. The complex is also required for degradation of PSIAA6 by regulating the activity of the Ubl ligase SCF-TIR complex. Not involved in CSN's deneddylation/derubylation activity. Essential for the structural integrity of the CSN holocomplex. In Arabidopsis thaliana (Mouse-ear cress), this protein is COP9 signalosome complex subunit 5b.